The following is a 385-amino-acid chain: MAWSQSARKPMIGLLFRAQQHGARGYSYSAFQAHLSSSNVDQSATLLRRFSSEVPASEQMNLIKQLRERTSAPIKDVKASLVSCNWDIDAAQKDLRKRGVVLAAKKSSRTAAEGLLAIAQDEKRAAVVELNCETDFVARNDVFQYLASSLAKLALSARDPGELVFPFGPDYLEVNLNVNLDHPKLSGETTVQSAVTELAAMVGENVKFRRGFIMSTTAHGVVCSYMHTCPQPGLGRLAGLITLEAEDSNAPLDALQRVGKSIAMHIVATKPLFLSKELVSASAVENERDILRTQAESSGKSQMAMEKMVEGRLRKYFEEVVLLEQKYVVNDSTNIKSVLNDLSKEVGSKVTVGNFARMEVGEGVSKLFQQILIVTRKRKEWILSK.

The transit peptide at 1 to 50 directs the protein to the mitochondrion; sequence MAWSQSARKPMIGLLFRAQQHGARGYSYSAFQAHLSSSNVDQSATLLRRF.

The protein belongs to the EF-Ts family.

It localises to the mitochondrion. Functionally, associates with the EF-Tu.GDP complex and induces the exchange of GDP to GTP. It remains bound to the aminoacyl-tRNA.EF-Tu.GTP complex up to the GTP hydrolysis stage on the ribosome. This Oryza sativa subsp. indica (Rice) protein is Elongation factor Ts, mitochondrial.